Consider the following 791-residue polypeptide: 1-phosphatidylinositol 4,5-bisphosphate phosphodiesterase delta-4 (791 aa).

A PH domain is found at 16 to 124 (LLMQKGTMMR…WMQGLQLLVG (109 aa)). The substrate binding stretch occupies residues 26-53 (KVRSKSWKKLRFFRLQDDGMTVWHARQA). EF-hand domains follow at residues 134–169 (RLDQ…MNVE), 170–205 (MDQE…LTQR), and 207–237 (EVQE…EQKE). Residues D147, N149, D151, R153, E158, D183, S185, S187, T189, and E194 each coordinate Ca(2+). The GBA motif lies at 213-243 (EKFSSDGQKLTLLEFVDFLQEEQKEGERASD). Positions 290–435 (QDMTQPLNHY…LRGKILVKGK (146 aa)) constitute a PI-PLC X-box domain. H305 is an active-site residue. Residues N306, E335, and D337 each coordinate Ca(2+). Residue H350 is part of the active site. A Ca(2+)-binding site is contributed by E384. Positions 433, 435, 551, and 578 each coordinate substrate. In terms of domain architecture, PI-PLC Y-box spans 522–638 (LSALVVYLKA…GYVLKPDFLR (117 aa)). The C2 domain maps to 638–765 (RDAQSSFHPE…QGYRHIHLLS (128 aa)). Residues I679, D681, N705, D734, Y735, and D736 each contribute to the Ca(2+) site. The PDZ-binding motif lies at 760-763 (HIHL).

As to quaternary structure, interacts with GRIP1. Interacts (via GBA motif) with guanine nucleotide-binding protein G(i) alpha subunit GNAI3 (inactive GDP-bound form); low-affinity interaction. It depends on Ca(2+) as a cofactor.

The protein localises to the membrane. Its subcellular location is the nucleus. The protein resides in the cytoplasm. It localises to the endoplasmic reticulum. The catalysed reaction is a 1,2-diacyl-sn-glycero-3-phospho-(1D-myo-inositol-4,5-bisphosphate) + H2O = 1D-myo-inositol 1,4,5-trisphosphate + a 1,2-diacyl-sn-glycerol + H(+). It catalyses the reaction a 1,2-diacyl-sn-glycero-3-phospho-(1D-myo-inositol) + H2O = 1D-myo-inositol 1-phosphate + a 1,2-diacyl-sn-glycerol + H(+). In terms of biological role, hydrolyzes the phosphatidylinositol 4,5-bisphosphate (PIP2) to generate 2 second messenger molecules diacylglycerol (DAG) and inositol 1,4,5-trisphosphate (IP3). DAG mediates the activation of protein kinase C (PKC), while IP3 releases Ca(2+) from intracellular stores. Required for acrosome reaction in sperm during fertilization, probably by acting as an important enzyme for intracellular Ca(2+) mobilization in the zona pellucida-induced acrosome reaction. May play a role in cell growth. Modulates the liver regeneration in cooperation with nuclear PKC. Overexpression up-regulates the Erk signaling pathway and proliferation. The protein is 1-phosphatidylinositol 4,5-bisphosphate phosphodiesterase delta-4 (PLCD4) of Bos taurus (Bovine).